Consider the following 480-residue polypeptide: Phosphoglucosamine mutase (480 aa).

The tract at residues 1-41 is disordered; the sequence is MPKHTKKDPREGAPSATGEPQKQAAGRKLFGTDGVRGVANQ. Catalysis depends on serine 127, which acts as the Phosphoserine intermediate. Mg(2+)-binding residues include serine 127, aspartate 269, aspartate 271, and aspartate 273. Position 127 is a phosphoserine (serine 127).

It belongs to the phosphohexose mutase family. It depends on Mg(2+) as a cofactor. Activated by phosphorylation.

It catalyses the reaction alpha-D-glucosamine 1-phosphate = D-glucosamine 6-phosphate. Its function is as follows. Catalyzes the conversion of glucosamine-6-phosphate to glucosamine-1-phosphate. The polypeptide is Phosphoglucosamine mutase (Sorangium cellulosum (strain So ce56) (Polyangium cellulosum (strain So ce56))).